The chain runs to 388 residues: Staphopain A (388 aa).

Residues 1-25 (MKRNFPKLIALSLIFSLSITPIANA) form the signal peptide. Residues 26–214 (ESNSNIKAKD…TSQFKSNNYT (189 aa)) constitute a propeptide that is removed on maturation. Catalysis depends on residues C238, H334, and N355.

The protein belongs to the peptidase C47 family. In terms of assembly, in the cytoplasm, prematurely activated/folded ScpA forms a stable non-covalent complex with ScpB. Post-translationally, cleavage leads to the activation of ScpA probably by an auto-catalytic manner.

It localises to the secreted. The catalysed reaction is Broad endopeptidase action on proteins including elastin, but rather limited hydrolysis of small-molecule substrates. Assays are conveniently made with hemoglobin, casein or Z-Phe-Arg-NHMec as substrate.. With respect to regulation, prematurely activated/folded staphopain A is inhibited by staphostatin A (ScpB), which is probably required to protect staphylococcal cytoplasmic proteins from degradation by ScpA. Its function is as follows. Cysteine protease that plays an important role in the inhibition of host innate immune response. Cleaves host elastins found in connective tissues, pulmonary surfactant protein A in the lungs, and the chemokine receptor CXCR2 on leukocytes. Proteolytic cleavage of surfactant protein A impairs bacterial phagocytosis by neutrophils while CXCR2 degradation blocks neutrophil activation and chemotaxis. Additionally, promotes vascular leakage by activating the plasma kallikerin/kinin system, resulting in hypotension. The chain is Staphopain A (sspP) from Staphylococcus aureus (strain MRSA252).